The sequence spans 448 residues: Fibulin-5 (448 aa).

The first 23 residues, Met1–Ala23, serve as a signal peptide directing secretion. The 41-residue stretch at Asp42–Asn82 folds into the EGF-like 1; calcium-binding domain. Cystine bridges form between Cys46/Cys59, Cys53/Cys68, Cys131/Cys144, Cys138/Cys153, Cys155/Cys166, Cys172/Cys181, Cys177/Cys190, Cys192/Cys205, Cys211/Cys221, Cys217/Cys230, Cys232/Cys245, Cys251/Cys262, Cys258/Cys271, Cys273/Cys286, Cys292/Cys305, Cys299/Cys314, and Cys320/Cys332. The Cell attachment site motif lies at Arg54 to Asp56. In terms of domain architecture, EGF-like 2; calcium-binding spans Asp127–Leu167. Residues Asp168–Gln206 form the EGF-like 3; calcium-binding domain. One can recognise an EGF-like 4; calcium-binding domain in the interval Asp207–Ser246. The tract at residues Cys245–Phe448 is interaction with LOXL1. In terms of domain architecture, EGF-like 5; calcium-binding spans Asp247–Gln287. Asn283 and Asn296 each carry an N-linked (GlcNAc...) asparagine glycan. The 46-residue stretch at Asp288–Met333 folds into the EGF-like 6; calcium-binding domain.

It belongs to the fibulin family. As to quaternary structure, homodimer. Monomer, homodimerizes in presence of Ca(2+). Interacts with ELN. Interacts (via N-terminus) with the integrins ITGAV/ITGB3, ITGAV/ITGB5 and ITGA9/ITGB1. Interacts with FBN1 (via N-terminal domain). Forms a ternary complex with ELN and FBN1. Interacts with EFEMP2 with moderate affinity. Interacts with LOXL1. Post-translationally, N-glycosylated.

It localises to the secreted. The protein resides in the extracellular space. Its subcellular location is the extracellular matrix. Functionally, essential for elastic fiber formation, is involved in the assembly of continuous elastin (ELN) polymer and promotes the interaction of microfibrils and ELN. Stabilizes and organizes elastic fibers in the skin, lung and vasculature. Promotes adhesion of endothelial cells through interaction of integrins and the RGD motif. Vascular ligand for integrin receptors which may play a role in vascular development and remodeling. May act as an adapter that mediates the interaction between FBN1 and ELN. The polypeptide is Fibulin-5 (Fbln5) (Mus musculus (Mouse)).